An 83-amino-acid chain; its full sequence is Cytochrome b559 subunit alpha (83 aa).

Residues 21–35 (VIHSITIPSLFIAGW) form a helical membrane-spanning segment. Histidine 23 contacts heme.

This sequence belongs to the PsbE/PsbF family. In terms of assembly, heterodimer of an alpha subunit and a beta subunit. PSII is composed of 1 copy each of membrane proteins PsbA, PsbB, PsbC, PsbD, PsbE, PsbF, PsbH, PsbI, PsbJ, PsbK, PsbL, PsbM, PsbT, PsbX, PsbY, PsbZ, Psb30/Ycf12, at least 3 peripheral proteins of the oxygen-evolving complex and a large number of cofactors. It forms dimeric complexes. Requires heme b as cofactor.

Its subcellular location is the plastid. It localises to the chloroplast thylakoid membrane. In terms of biological role, this b-type cytochrome is tightly associated with the reaction center of photosystem II (PSII). PSII is a light-driven water:plastoquinone oxidoreductase that uses light energy to abstract electrons from H(2)O, generating O(2) and a proton gradient subsequently used for ATP formation. It consists of a core antenna complex that captures photons, and an electron transfer chain that converts photonic excitation into a charge separation. The polypeptide is Cytochrome b559 subunit alpha (Marchantia polymorpha (Common liverwort)).